Reading from the N-terminus, the 250-residue chain is UPF0736 protein BPUM_1067 (250 aa).

The protein belongs to the UPF0736 family.

The protein is UPF0736 protein BPUM_1067 of Bacillus pumilus (strain SAFR-032).